A 125-amino-acid chain; its full sequence is Large ribosomal subunit protein bL12 (125 aa).

Belongs to the bacterial ribosomal protein bL12 family. Homodimer. Part of the ribosomal stalk of the 50S ribosomal subunit. Forms a multimeric L10(L12)X complex, where L10 forms an elongated spine to which 2 to 4 L12 dimers bind in a sequential fashion. Binds GTP-bound translation factors.

Functionally, forms part of the ribosomal stalk which helps the ribosome interact with GTP-bound translation factors. Is thus essential for accurate translation. In Rickettsia conorii (strain ATCC VR-613 / Malish 7), this protein is Large ribosomal subunit protein bL12.